The following is a 296-amino-acid chain: Phosphatidylglycerol--prolipoprotein diacylglyceryl transferase (296 aa).

The next 4 helical transmembrane spans lie at 10 to 30 (IAFS…LAAF), 57 to 77 (LLFY…MLFY), 92 to 112 (VWEG…ACWL), and 119 to 139 (LHFF…LGFG). Arg-140 contributes to the a 1,2-diacyl-sn-glycero-3-phospho-(1'-sn-glycerol) binding site. A run of 3 helical transmembrane segments spans residues 194–214 (QLYE…TFSM), 220–240 (YAVS…VEFV), and 254–274 (WLTM…VLLA).

Belongs to the Lgt family.

The protein localises to the cell inner membrane. It catalyses the reaction L-cysteinyl-[prolipoprotein] + a 1,2-diacyl-sn-glycero-3-phospho-(1'-sn-glycerol) = an S-1,2-diacyl-sn-glyceryl-L-cysteinyl-[prolipoprotein] + sn-glycerol 1-phosphate + H(+). It participates in protein modification; lipoprotein biosynthesis (diacylglyceryl transfer). Catalyzes the transfer of the diacylglyceryl group from phosphatidylglycerol to the sulfhydryl group of the N-terminal cysteine of a prolipoprotein, the first step in the formation of mature lipoproteins. The protein is Phosphatidylglycerol--prolipoprotein diacylglyceryl transferase of Xanthomonas axonopodis pv. citri (strain 306).